The sequence spans 243 residues: UPF0502 protein H16_B1091 (243 aa).

Residues Met-1–Pro-23 form a disordered region.

Belongs to the UPF0502 family.

The sequence is that of UPF0502 protein H16_B1091 from Cupriavidus necator (strain ATCC 17699 / DSM 428 / KCTC 22496 / NCIMB 10442 / H16 / Stanier 337) (Ralstonia eutropha).